We begin with the raw amino-acid sequence, 102 residues long: Major basic nuclear protein 2 (102 aa).

A compositionally biased stretch (basic residues) spans 1-11; the sequence is MKAMKATKKAM. The tract at residues 1 to 43 is disordered; it reads MKAMKATKKAMTKTGLAEALAPKPSSARRIAPPSSRAWPPSAQ. Residues 21–42 show a composition bias toward low complexity; the sequence is APKPSSARRIAPPSSRAWPPSA.

It localises to the nucleus. This is Major basic nuclear protein 2 (HCc2) from Crypthecodinium cohnii (Dinoflagellate).